The following is a 490-amino-acid chain: Betaine aldehyde dehydrogenase (490 aa).

Residue Asn93 coordinates K(+). 150–152 (GAW) contributes to the NAD(+) binding site. The active-site Charge relay system is the Lys162. 176-179 (KPSE) contributes to the NAD(+) binding site. Residue Val180 participates in K(+) binding. 230–233 (GTAT) contacts NAD(+). Position 246 (Leu246) interacts with K(+). The active-site Proton acceptor is the Glu252. 3 residues coordinate NAD(+): Gly254, Cys286, and Glu387. Cys286 (nucleophile) is an active-site residue. The residue at position 286 (Cys286) is a Cysteine sulfenic acid (-SOH). K(+)-binding residues include Lys457 and Gly460. Glu464 serves as the catalytic Charge relay system.

The protein belongs to the aldehyde dehydrogenase family. As to quaternary structure, dimer of dimers. K(+) serves as cofactor.

The catalysed reaction is betaine aldehyde + NAD(+) + H2O = glycine betaine + NADH + 2 H(+). It functions in the pathway amine and polyamine biosynthesis; betaine biosynthesis via choline pathway; betaine from betaine aldehyde: step 1/1. Involved in the biosynthesis of the osmoprotectant glycine betaine. Catalyzes the irreversible oxidation of betaine aldehyde to the corresponding acid. This chain is Betaine aldehyde dehydrogenase, found in Xanthomonas euvesicatoria pv. vesicatoria (strain 85-10) (Xanthomonas campestris pv. vesicatoria).